The chain runs to 492 residues: GDP-fucose protein O-fucosyltransferase 4 (492 aa).

Topologically, residues 1–7 (MAAGPIR) are cytoplasmic. The helical; Signal-anchor for type II membrane protein transmembrane segment at 8–24 (VVLVLLGVLSVCAASGH) threads the bilayer. Residues 25-492 (GSVAEREAGG…HEIFMKRQHL (468 aa)) lie on the Lumenal side of the membrane. N-linked (GlcNAc...) asparagine glycosylation occurs at asparagine 166. A disulfide bridge connects residues cysteine 389 and cysteine 392. Residue asparagine 443 is glycosylated (N-linked (GlcNAc...) asparagine).

This sequence belongs to the glycosyltransferase 10 family.

It is found in the endoplasmic reticulum membrane. The catalysed reaction is L-threonyl-[protein] + GDP-beta-L-fucose = 3-O-(alpha-L-fucosyl)-L-threonyl-[protein] + GDP + H(+). It carries out the reaction L-seryl-[protein] + GDP-beta-L-fucose = 3-O-(alpha-L-fucosyl)-L-seryl-[protein] + GDP + H(+). It functions in the pathway protein modification; protein glycosylation. Its function is as follows. Protein O-fucosyltransferase that specifically catalyzes O-fucosylation of serine or threonine residues in EMI domains of target proteins, such as MMRN1, MMRN2 and EMID1. Attaches fucose through an O-glycosidic linkage. O-fucosylation of EMI domain-containing proteins may be required for facilitating protein folding and secretion. Also shows minor alpha-(1,3)-fucosyltransferase activity toward activity toward biantennary N-glycan acceptors. However, this was tested with a library of synthetic substrates and this activity is unsure in vivo. This chain is GDP-fucose protein O-fucosyltransferase 4, found in Homo sapiens (Human).